The chain runs to 361 residues: Histidinol-phosphate aminotransferase (361 aa).

At K218 the chain carries N6-(pyridoxal phosphate)lysine.

The protein belongs to the class-II pyridoxal-phosphate-dependent aminotransferase family. Histidinol-phosphate aminotransferase subfamily. Homodimer. The cofactor is pyridoxal 5'-phosphate.

The enzyme catalyses L-histidinol phosphate + 2-oxoglutarate = 3-(imidazol-4-yl)-2-oxopropyl phosphate + L-glutamate. It functions in the pathway amino-acid biosynthesis; L-histidine biosynthesis; L-histidine from 5-phospho-alpha-D-ribose 1-diphosphate: step 7/9. This Ruegeria pomeroyi (strain ATCC 700808 / DSM 15171 / DSS-3) (Silicibacter pomeroyi) protein is Histidinol-phosphate aminotransferase.